The following is a 453-amino-acid chain: Trigger factor (453 aa).

In terms of domain architecture, PPIase FKBP-type spans glycine 171–leucine 256.

It belongs to the FKBP-type PPIase family. Tig subfamily.

The protein resides in the cytoplasm. The catalysed reaction is [protein]-peptidylproline (omega=180) = [protein]-peptidylproline (omega=0). Its function is as follows. Involved in protein export. Acts as a chaperone by maintaining the newly synthesized protein in an open conformation. Functions as a peptidyl-prolyl cis-trans isomerase. In Nitrobacter winogradskyi (strain ATCC 25391 / DSM 10237 / CIP 104748 / NCIMB 11846 / Nb-255), this protein is Trigger factor.